The sequence spans 279 residues: 2-dehydro-3-deoxyphosphooctonate aldolase (279 aa).

This sequence belongs to the KdsA family.

It localises to the cytoplasm. It carries out the reaction D-arabinose 5-phosphate + phosphoenolpyruvate + H2O = 3-deoxy-alpha-D-manno-2-octulosonate-8-phosphate + phosphate. Its pathway is carbohydrate biosynthesis; 3-deoxy-D-manno-octulosonate biosynthesis; 3-deoxy-D-manno-octulosonate from D-ribulose 5-phosphate: step 2/3. It participates in bacterial outer membrane biogenesis; lipopolysaccharide biosynthesis. The chain is 2-dehydro-3-deoxyphosphooctonate aldolase from Methylobacillus flagellatus (strain ATCC 51484 / DSM 6875 / VKM B-1610 / KT).